Reading from the N-terminus, the 83-residue chain is Small ribosomal subunit protein bS20 (83 aa).

Residues 1–21 (MPNIKSAIKRVRTTETAEERN) form a disordered region. Residues 12-21 (RTTETAEERN) show a composition bias toward basic and acidic residues.

The protein belongs to the bacterial ribosomal protein bS20 family.

Functionally, binds directly to 16S ribosomal RNA. The sequence is that of Small ribosomal subunit protein bS20 from Staphylococcus epidermidis (strain ATCC 35984 / DSM 28319 / BCRC 17069 / CCUG 31568 / BM 3577 / RP62A).